Here is a 205-residue protein sequence, read N- to C-terminus: Phosphoheptose isomerase (205 aa).

Residues 38–200 (LAVRLALGSK…LFEAVGELEP (163 aa)) enclose the SIS domain. Residue 53 to 55 (NGG) participates in substrate binding. Zn(2+) contacts are provided by H62 and E66. Substrate contacts are provided by residues E66, 95-96 (ND), 121-123 (STS), S126, and Q173. The Zn(2+) site is built by Q173 and H181.

The protein belongs to the SIS family. GmhA subfamily. As to quaternary structure, homotetramer. It depends on Zn(2+) as a cofactor.

Its subcellular location is the cytoplasm. The enzyme catalyses 2 D-sedoheptulose 7-phosphate = D-glycero-alpha-D-manno-heptose 7-phosphate + D-glycero-beta-D-manno-heptose 7-phosphate. It functions in the pathway carbohydrate biosynthesis; D-glycero-D-manno-heptose 7-phosphate biosynthesis; D-glycero-alpha-D-manno-heptose 7-phosphate and D-glycero-beta-D-manno-heptose 7-phosphate from sedoheptulose 7-phosphate: step 1/1. In terms of biological role, catalyzes the isomerization of sedoheptulose 7-phosphate in D-glycero-D-manno-heptose 7-phosphate. The protein is Phosphoheptose isomerase of Maridesulfovibrio salexigens (strain ATCC 14822 / DSM 2638 / NCIMB 8403 / VKM B-1763) (Desulfovibrio salexigens).